The following is a 142-amino-acid chain: Peptide methionine sulfoxide reductase MsrB (142 aa).

Positions 2–125 (LKKDKSELTD…NSAAIQFIPY (124 aa)) constitute a MsrB domain. Catalysis depends on Cys114, which acts as the Nucleophile.

It belongs to the MsrB Met sulfoxide reductase family.

It carries out the reaction L-methionyl-[protein] + [thioredoxin]-disulfide + H2O = L-methionyl-(R)-S-oxide-[protein] + [thioredoxin]-dithiol. This chain is Peptide methionine sulfoxide reductase MsrB, found in Staphylococcus aureus (strain USA300).